The sequence spans 625 residues: Chaperone protein DnaK (625 aa).

Threonine 197 bears the Phosphothreonine; by autocatalysis mark. A disordered region spans residues 598–625; it reads AYAKEQGGTQQGTDTKKKDDDVIDAEVE.

The protein belongs to the heat shock protein 70 family.

Its function is as follows. Acts as a chaperone. The chain is Chaperone protein DnaK from Helicobacter hepaticus (strain ATCC 51449 / 3B1).